The sequence spans 362 residues: Probable choline-phosphate cytidylyltransferase (362 aa).

Over residues 1–37 the composition is skewed to basic and acidic residues; sequence MGEEGIKINDTHKRRIDEVEPSEKEDNVERQTKKYNF. The interval 1-79 is disordered; sequence MGEEGIKIND…VSPVEEEPRD (79 aa). Residues 109-117 and lysine 147 contribute to the CTP site; that span reads VFDLFHIGH. Substrate-binding residues include lysine 147 and tryptophan 176. CTP-binding positions include 193–194, tyrosine 198, and 221–225; these read HD and RTEGV. The tract at residues 308–362 is disordered; that stretch reads KNPLHGSSEPSSPGPTGFLGGINRWMQRRSSSHYDLPRVGNEIAASSSSATEENH. Low complexity-rich tracts occupy residues 313–323 and 351–362; these read GSSEPSSPGPT and AASSSSATEENH. A phosphoserine mark is found at serine 315 and serine 319. At threonine 323 the chain carries Phosphothreonine. Residue serine 355 is modified to Phosphoserine.

The protein belongs to the cytidylyltransferase family.

The protein localises to the nucleus. The catalysed reaction is phosphocholine + CTP + H(+) = CDP-choline + diphosphate. The sequence is that of Probable choline-phosphate cytidylyltransferase from Schizosaccharomyces pombe (strain 972 / ATCC 24843) (Fission yeast).